Here is a 250-residue protein sequence, read N- to C-terminus: Putative apoptosis inhibitor ORF99 (250 aa).

One copy of the BIR repeat lies at R13 to K78.

May act as an apoptosis inhibitor. The protein is Putative apoptosis inhibitor ORF99 of Ostreid herpesvirus 1 (isolate France) (OsHV-1).